The primary structure comprises 952 residues: Leucine--tRNA ligase (952 aa).

The 'HIGH' region motif lies at P66 to H77. The short motif at K722 to S726 is the 'KMSKS' region element. K725 contributes to the ATP binding site.

Belongs to the class-I aminoacyl-tRNA synthetase family.

The protein localises to the cytoplasm. It carries out the reaction tRNA(Leu) + L-leucine + ATP = L-leucyl-tRNA(Leu) + AMP + diphosphate. The protein is Leucine--tRNA ligase of Corynebacterium glutamicum (strain ATCC 13032 / DSM 20300 / JCM 1318 / BCRC 11384 / CCUG 27702 / LMG 3730 / NBRC 12168 / NCIMB 10025 / NRRL B-2784 / 534).